A 305-amino-acid chain; its full sequence is Olfactory receptor 9G19 (305 aa).

The Extracellular portion of the chain corresponds to 1-24 (MDQNNNTVSEFIMLGFTTDPVIQK). Residues 25-45 (VLFAVFLVVYTLTLMGNSSLI) traverse the membrane as a helical segment. Topologically, residues 46–55 (MLICNDSRLH) are cytoplasmic. The chain crosses the membrane as a helical span at residues 56-76 (TPMYFFIGNLSFLDLGLSSVY). The Extracellular portion of the chain corresponds to 77–96 (TPKILETCISEDKSISFAGC). Residues Cys96 and Cys178 are joined by a disulfide bond. Residues 97 to 117 (VAQFFFSAALDYTECYLLAAM) form a helical membrane-spanning segment. Residues 118–138 (AYDRYVAISKPLLYSQAMSLK) lie on the Cytoplasmic side of the membrane. The chain crosses the membrane as a helical span at residues 139–159 (LCVCFVVASYVGGFINSVIIT). Residues 160-204 (KDTFALTFCNDNVIDDFFCDIPPLVKLACGKKKSFQSVLFFLLTS) are Extracellular-facing. The helical transmembrane segment at 205–225 (NVIIPIVFILATYLFIIATIL) threads the bilayer. Over 226 to 236 (RIRSTQGRLKA) the chain is Cytoplasmic. Residues 237–257 (FSTCSSHLISVTLYYGSILYI) traverse the membrane as a helical segment. At 258–270 (YARPRSSYSLDRD) the chain is on the extracellular side. Residues 271-291 (KIVSTFYTVVFPMLNPLIYSL) traverse the membrane as a helical segment. Residues 292-305 (RNKDVKEALNKLLK) are Cytoplasmic-facing.

The protein belongs to the G-protein coupled receptor 1 family.

It is found in the cell membrane. In terms of biological role, odorant receptor. This is Olfactory receptor 9G19 from Mus musculus (Mouse).